Consider the following 651-residue polypeptide: DNA mismatch repair protein MutL (651 aa).

Positions 383-405 (TAAEEPTPAPTSPDLEIGDLDDQ) are disordered.

Belongs to the DNA mismatch repair MutL/HexB family.

Functionally, this protein is involved in the repair of mismatches in DNA. It is required for dam-dependent methyl-directed DNA mismatch repair. May act as a 'molecular matchmaker', a protein that promotes the formation of a stable complex between two or more DNA-binding proteins in an ATP-dependent manner without itself being part of a final effector complex. This chain is DNA mismatch repair protein MutL, found in Lacticaseibacillus casei (strain BL23) (Lactobacillus casei).